The following is a 377-amino-acid chain: DNA replication and repair protein RecF (377 aa).

ATP is bound at residue 30-37 (GPNGQGKT).

Belongs to the RecF family.

It localises to the cytoplasm. The RecF protein is involved in DNA metabolism; it is required for DNA replication and normal SOS inducibility. RecF binds preferentially to single-stranded, linear DNA. It also seems to bind ATP. The chain is DNA replication and repair protein RecF from Thermobifida fusca (strain YX).